A 264-amino-acid chain; its full sequence is Glutamate racemase (264 aa).

Substrate contacts are provided by residues 11-12 and 43-44; these read DS and YG. Cys74 (proton donor/acceptor) is an active-site residue. Position 75–76 (75–76) interacts with substrate; it reads NT. Catalysis depends on Cys193, which acts as the Proton donor/acceptor. 194-195 provides a ligand contact to substrate; that stretch reads TH.

Belongs to the aspartate/glutamate racemases family.

It carries out the reaction L-glutamate = D-glutamate. It participates in cell wall biogenesis; peptidoglycan biosynthesis. Functionally, provides the (R)-glutamate required for cell wall biosynthesis. This Bifidobacterium longum (strain DJO10A) protein is Glutamate racemase.